The sequence spans 442 residues: Trigger factor (442 aa).

The region spanning Asp-165–Pro-250 is the PPIase FKBP-type domain.

Belongs to the FKBP-type PPIase family. Tig subfamily.

It localises to the cytoplasm. It catalyses the reaction [protein]-peptidylproline (omega=180) = [protein]-peptidylproline (omega=0). Functionally, involved in protein export. Acts as a chaperone by maintaining the newly synthesized protein in an open conformation. Functions as a peptidyl-prolyl cis-trans isomerase. This chain is Trigger factor, found in Coxiella burnetii (strain CbuK_Q154) (Coxiella burnetii (strain Q154)).